The following is a 143-amino-acid chain: UPF0047 protein MTH_771 (143 aa).

Belongs to the UPF0047 family.

In Methanothermobacter thermautotrophicus (strain ATCC 29096 / DSM 1053 / JCM 10044 / NBRC 100330 / Delta H) (Methanobacterium thermoautotrophicum), this protein is UPF0047 protein MTH_771.